We begin with the raw amino-acid sequence, 425 residues long: Divalent metal cation transporter MntH (425 aa).

11 helical membrane passes run 30 to 50, 61 to 81, 107 to 127, 134 to 154, 167 to 187, 209 to 231, 255 to 275, 294 to 314, 344 to 364, 365 to 385, and 401 to 421; these read LLPFLGPAFIAAIAYIDPGNF, GYMLLWVILFSNIMALLIQSL, IGLWIQGELVIIATDLAEFIG, LLFGIPMLEASIIAAIGSFAI, AGIAGMLFVVVIAFALQTFFA, VLLAAGILGATVMPHAIYLHSAL, ILIAMLIAGAINASMLIVAAA, FGHLVSPMSAALFGIGLLVAG, FITIIPPILIIASGVNPTTAL, VLSQVVLSFGIAFALIPLIMF, and ITVVSWLIAVLIVALNVFLIV.

It belongs to the NRAMP family.

The protein localises to the cell membrane. Its function is as follows. H(+)-stimulated, divalent metal cation uptake system. Involved in manganese uptake. Can probably also transport cadmium, cobalt, copper and zinc, but not iron. May be the predominant transporter of manganese during logarithmic phase growth. This chain is Divalent metal cation transporter MntH, found in Bacillus subtilis (strain 168).